The sequence spans 380 residues: Probable RAD2-like endonuclease 076L (380 aa).

The tract at residues 1-101 (MGIKNLTQFL…QKIVSKTDAI (101 aa)) is N-domain. Residues D32, E73, E191, E193, D212, D214, and D281 each contribute to the Mg(2+) site. Residues 156 to 301 (IDRRRKYEFS…EKAYKYISDY (146 aa)) form an I-domain region.

Belongs to the XPG/RAD2 endonuclease family. Requires Mg(2+) as cofactor.

It localises to the host nucleus. Its function is as follows. Probable endonuclease. This is Probable RAD2-like endonuclease 076L from Invertebrate iridescent virus 3 (IIV-3).